The following is a 172-amino-acid chain: C-phycocyanin beta chain (172 aa).

An N4-methylasparagine modification is found at Asn72. (2R,3E)-phycocyanobilin-binding residues include Cys82 and Cys153.

Belongs to the phycobiliprotein family. As to quaternary structure, heterodimer of an alpha and a beta subunit, which further assembles into trimers and the trimers into hexamers. The basic functional unit of phycobiliproteins is a ring-shaped hexamer formed from two back-to-back trimers contacting via the alpha chain subunits. The trimers are composed of alpha/beta subunit heterodimers arranged around a three-fold axis of symmetry. The phycoerythrins also contain a gamma subunit which is located in the center of the hexamer. Contains two covalently linked bilin chromophores.

The protein resides in the plastid. Its subcellular location is the chloroplast thylakoid membrane. Functionally, light-harvesting photosynthetic bile pigment-protein from the phycobiliprotein complex (phycobilisome, PBS). Phycocyanin is the major phycobiliprotein in the PBS rod. This is C-phycocyanin beta chain (cpcB) from Porphyra purpurea (Red seaweed).